We begin with the raw amino-acid sequence, 417 residues long: Serine--tRNA ligase (417 aa).

An L-serine-binding site is contributed by 224 to 226; sequence TSE. ATP is bound by residues 255-257 and Val271; that span reads RRE. Glu278 serves as a coordination point for L-serine. 342-345 provides a ligand contact to ATP; it reads ELTS. Residue Thr377 participates in L-serine binding.

Belongs to the class-II aminoacyl-tRNA synthetase family. Type-1 seryl-tRNA synthetase subfamily. Homodimer. The tRNA molecule binds across the dimer.

Its subcellular location is the cytoplasm. It catalyses the reaction tRNA(Ser) + L-serine + ATP = L-seryl-tRNA(Ser) + AMP + diphosphate + H(+). The catalysed reaction is tRNA(Sec) + L-serine + ATP = L-seryl-tRNA(Sec) + AMP + diphosphate + H(+). It functions in the pathway aminoacyl-tRNA biosynthesis; selenocysteinyl-tRNA(Sec) biosynthesis; L-seryl-tRNA(Sec) from L-serine and tRNA(Sec): step 1/1. Functionally, catalyzes the attachment of serine to tRNA(Ser). Is also able to aminoacylate tRNA(Sec) with serine, to form the misacylated tRNA L-seryl-tRNA(Sec), which will be further converted into selenocysteinyl-tRNA(Sec). The protein is Serine--tRNA ligase of Mycobacterium leprae (strain TN).